The primary structure comprises 225 residues: Ferric nitrobindin-like protein (225 aa).

Positions glycine 78–glycine 84 match the GXWXGXG motif.

The protein belongs to the nitrobindin family.

This chain is Ferric nitrobindin-like protein, found in Corynebacterium diphtheriae (strain ATCC 700971 / NCTC 13129 / Biotype gravis).